We begin with the raw amino-acid sequence, 117 residues long: NADH-ubiquinone oxidoreductase chain 3 (117 aa).

Helical transmembrane passes span 6–26 (ILILLIISGTLSILILGASYI), 58–78 (FFLIGILFLIFDLEISFLFPW), and 85–105 (LPLFGYWVVMLFLFILTLGLI).

Belongs to the complex I subunit 3 family.

Its subcellular location is the mitochondrion membrane. It catalyses the reaction a ubiquinone + NADH + 5 H(+)(in) = a ubiquinol + NAD(+) + 4 H(+)(out). Its function is as follows. Core subunit of the mitochondrial membrane respiratory chain NADH dehydrogenase (Complex I) that is believed to belong to the minimal assembly required for catalysis. Complex I functions in the transfer of electrons from NADH to the respiratory chain. The immediate electron acceptor for the enzyme is believed to be ubiquinone. This is NADH-ubiquinone oxidoreductase chain 3 (ND3) from Sarcophyton glaucum (Toadstool umbrella leather coral).